The sequence spans 145 residues: MKGLLQRVRGARVEVAGDIVGAVDQGLLVLVAVEPEDTRASADKLLHKLLNYRVFSDAEGKMNLSLADVQGGLLLVSQFTLAADTKSGLRPSFSTAAPPALGEELFDYLVVKAQQLHGKVASGRFGADMQVHLVNDGPVTFLLQT.

The short motif at 137–138 is the Gly-cisPro motif, important for rejection of L-amino acids element; the sequence is GP.

Belongs to the DTD family. Homodimer.

The protein localises to the cytoplasm. It carries out the reaction glycyl-tRNA(Ala) + H2O = tRNA(Ala) + glycine + H(+). The catalysed reaction is a D-aminoacyl-tRNA + H2O = a tRNA + a D-alpha-amino acid + H(+). An aminoacyl-tRNA editing enzyme that deacylates mischarged D-aminoacyl-tRNAs. Also deacylates mischarged glycyl-tRNA(Ala), protecting cells against glycine mischarging by AlaRS. Acts via tRNA-based rather than protein-based catalysis; rejects L-amino acids rather than detecting D-amino acids in the active site. By recycling D-aminoacyl-tRNA to D-amino acids and free tRNA molecules, this enzyme counteracts the toxicity associated with the formation of D-aminoacyl-tRNA entities in vivo and helps enforce protein L-homochirality. This is D-aminoacyl-tRNA deacylase from Pseudomonas fluorescens (strain ATCC BAA-477 / NRRL B-23932 / Pf-5).